We begin with the raw amino-acid sequence, 227 residues long: MKAVLLVSGGMDSLVATALAHHHGFELAAMHVNYGQRTWQKELECFRQICDHYGIEKRLEIDAGFLGAIGGSSLTDAAIPVGPADLAGTDIPTSYVPFRNANFLSMAVSWSEVIGANRIYIGAVEEDSSGYPDCRKVFYDAFNQVIEHGTRPETSIEIVTPLIDMSKAEIVKRGMELDAPFHFSWSCYKSEGKACGVCDSCARRLRAFASVGIADPVEYEVRPDYLQ.

7–17 (VSGGMDSLVAT) contributes to the ATP binding site. Cys187, Cys195, Cys198, and Cys201 together coordinate Zn(2+).

It belongs to the QueC family. It depends on Zn(2+) as a cofactor.

It carries out the reaction 7-carboxy-7-deazaguanine + NH4(+) + ATP = 7-cyano-7-deazaguanine + ADP + phosphate + H2O + H(+). It participates in purine metabolism; 7-cyano-7-deazaguanine biosynthesis. Functionally, catalyzes the ATP-dependent conversion of 7-carboxy-7-deazaguanine (CDG) to 7-cyano-7-deazaguanine (preQ(0)). This chain is 7-cyano-7-deazaguanine synthase, found in Chlorobaculum parvum (strain DSM 263 / NCIMB 8327) (Chlorobium vibrioforme subsp. thiosulfatophilum).